Consider the following 416-residue polypeptide: Methylthioribose-1-phosphate isomerase (416 aa).

Residue aspartate 280 is the Proton donor of the active site.

The protein belongs to the eIF-2B alpha/beta/delta subunits family. MtnA subfamily.

The protein localises to the cytoplasm. The protein resides in the nucleus. The enzyme catalyses 5-(methylsulfanyl)-alpha-D-ribose 1-phosphate = 5-(methylsulfanyl)-D-ribulose 1-phosphate. The protein operates within amino-acid biosynthesis; L-methionine biosynthesis via salvage pathway; L-methionine from S-methyl-5-thio-alpha-D-ribose 1-phosphate: step 1/6. In terms of biological role, catalyzes the interconversion of methylthioribose-1-phosphate (MTR-1-P) into methylthioribulose-1-phosphate (MTRu-1-P). In Candida albicans (strain SC5314 / ATCC MYA-2876) (Yeast), this protein is Methylthioribose-1-phosphate isomerase.